A 378-amino-acid polypeptide reads, in one-letter code: Odorant receptor Or2 (378 aa).

Met1 is a topological domain (cytoplasmic). Residues 2–22 (LIEECPIIGVNVRVWLFWSYL) form a helical membrane-spanning segment. The Extracellular segment spans residues 23 to 29 (RRPRLSR). A helical membrane pass occupies residues 30–50 (FLVGCIPVAVLNVFQFLKLYS). The Cytoplasmic segment spans residues 51-59 (SWGDMSELI). The helical transmembrane segment at 60–80 (INGYFTVLYFNLVLRTSFLVI) threads the bilayer. Over 81 to 120 (NRRKFETFFEGVAAEYALLEKNDDIRPVLERYTRRGRMLS) the chain is Extracellular. A helical transmembrane segment spans residues 121 to 141 (ISNLWLGAFISACFVTYPLFV). The Cytoplasmic segment spans residues 142–164 (PGRGLPYGVTIPGVDVLATPTYQ). A helical membrane pass occupies residues 165–185 (VVFVLQVYLTFPACCMYIPFT). Residues 186–254 (SFYATCTLFA…HDLNSLVTHL (69 aa)) are Extracellular-facing. The helical transmembrane segment at 255-275 (CLLEFLSFGMMLCALLFLLSI) threads the bilayer. At 276–278 (SNQ) the chain is on the cytoplasmic side. Residues 279–299 (LAQMIMIGSYIFMILSQMFAF) traverse the membrane as a helical segment. At 300 to 378 (YWHANEVLEQ…YFTLLRRVYN (79 aa)) the chain is on the extracellular side. An N-linked (GlcNAc...) asparagine glycan is attached at Asn364.

This sequence belongs to the insect chemoreceptor superfamily. Heteromeric odorant receptor channel (TC 1.A.69) family. Or30a subfamily. As to expression, expressed in male and female antennae and maxillary palps.

Its subcellular location is the cell membrane. In terms of biological role, odorant receptor which plays a critical role in the anthropophilic host-seeking behavior; establishes the host preference to transmit malaria. The polypeptide is Odorant receptor Or2 (OR2) (Anopheles gambiae (African malaria mosquito)).